Consider the following 270-residue polypeptide: uncharacterized protein (270 aa).

Over residues 22 to 31 the composition is skewed to basic and acidic residues; it reads EAPQRTEASR. Residues 22 to 42 form a disordered region; sequence EAPQRTEASRTHPSPFLALPG.

This is an uncharacterized protein from Homo sapiens (Human).